Reading from the N-terminus, the 617-residue chain is Proline--tRNA ligase (617 aa).

It belongs to the class-II aminoacyl-tRNA synthetase family. ProS type 1 subfamily. As to quaternary structure, homodimer.

The protein localises to the cytoplasm. It carries out the reaction tRNA(Pro) + L-proline + ATP = L-prolyl-tRNA(Pro) + AMP + diphosphate. Catalyzes the attachment of proline to tRNA(Pro) in a two-step reaction: proline is first activated by ATP to form Pro-AMP and then transferred to the acceptor end of tRNA(Pro). As ProRS can inadvertently accommodate and process non-cognate amino acids such as alanine and cysteine, to avoid such errors it has two additional distinct editing activities against alanine. One activity is designated as 'pretransfer' editing and involves the tRNA(Pro)-independent hydrolysis of activated Ala-AMP. The other activity is designated 'posttransfer' editing and involves deacylation of mischarged Ala-tRNA(Pro). The misacylated Cys-tRNA(Pro) is not edited by ProRS. The polypeptide is Proline--tRNA ligase (Streptococcus agalactiae serotype V (strain ATCC BAA-611 / 2603 V/R)).